A 233-amino-acid chain; its full sequence is 2-amino-5-formylamino-6-ribosylaminopyrimidin-4(3H)-one 5'-monophosphate deformylase (233 aa).

Fe cation contacts are provided by Glu33, His35, Asp44, and His114.

Belongs to the creatininase superfamily. FAPy deformylase family. As to quaternary structure, homodimer. Requires Fe(2+) as cofactor. The cofactor is Zn(2+).

It catalyses the reaction 2-amino-5-formylamino-6-(5-phospho-D-ribosylamino)pyrimidin-4(3H)-one + H2O = 2,5-diamino-6-(1-D-ribosylamino)pyrimidin-4(3H)-one 5'-phosphate + formate + H(+). It participates in cofactor biosynthesis; coenzyme F420 biosynthesis. The protein operates within cofactor biosynthesis; riboflavin biosynthesis. Catalyzes the hydrolysis of the formamide of 2-amino-5-formylamino-6-ribosylamino-4(3H)-pyrimidinone 5'-monophosphate (FAPy) to form 2,5-diamino-6-ribosylamino-4(3H)-pyrimidinone 5'-phosphate (APy). This Methanosphaera stadtmanae (strain ATCC 43021 / DSM 3091 / JCM 11832 / MCB-3) protein is 2-amino-5-formylamino-6-ribosylaminopyrimidin-4(3H)-one 5'-monophosphate deformylase.